A 202-amino-acid polypeptide reads, in one-letter code: Orotate phosphoribosyltransferase (202 aa).

Residue 113 to 121 participates in 5-phospho-alpha-D-ribose 1-diphosphate binding; it reads EDIITTGGS. Orotate contacts are provided by Thr-117 and Arg-145.

The protein belongs to the purine/pyrimidine phosphoribosyltransferase family. PyrE subfamily. In terms of assembly, homodimer. Requires Mg(2+) as cofactor.

It carries out the reaction orotidine 5'-phosphate + diphosphate = orotate + 5-phospho-alpha-D-ribose 1-diphosphate. It participates in pyrimidine metabolism; UMP biosynthesis via de novo pathway; UMP from orotate: step 1/2. Functionally, catalyzes the transfer of a ribosyl phosphate group from 5-phosphoribose 1-diphosphate to orotate, leading to the formation of orotidine monophosphate (OMP). This chain is Orotate phosphoribosyltransferase, found in Nitratiruptor sp. (strain SB155-2).